The following is an 88-amino-acid chain: MVKLRLKRCGRKQRAVYRIVAIDVRSRREGRDLQKVGFYDPIKSQTYLNVPAILDFLEKGAQPTETVYDILKRAEVFKEFRLNQTKFN.

Component of the chloroplast small ribosomal subunit (SSU). Mature 70S chloroplast ribosomes of higher plants consist of a small (30S) and a large (50S) subunit. The 30S small subunit contains 1 molecule of ribosomal RNA (16S rRNA) and 24 different proteins. The 50S large subunit contains 3 rRNA molecules (23S, 5S and 4.5S rRNA) and 33 different proteins.

The protein localises to the plastid. It localises to the chloroplast. Component of the chloroplast ribosome (chloro-ribosome), a dedicated translation machinery responsible for the synthesis of chloroplast genome-encoded proteins, including proteins of the transcription and translation machinery and components of the photosynthetic apparatus. The sequence is that of Small ribosomal subunit protein bS16c from Spinacia oleracea (Spinach).